We begin with the raw amino-acid sequence, 421 residues long: BEN domain-containing protein 5 (421 aa).

N6-acetyllysine is present on Lys-133. A coiled-coil region spans residues 180-243; that stretch reads RALYEELLRN…LNRRLQDVLL (64 aa). Lys-258 participates in a covalent cross-link: Glycyl lysine isopeptide (Lys-Gly) (interchain with G-Cter in SUMO2). The BEN domain occupies 302–408; sequence GSGIWVDEEK…EKIMDINKSC (107 aa).

In terms of biological role, acts as a transcriptional repressor. The chain is BEN domain-containing protein 5 (Bend5) from Mus musculus (Mouse).